A 226-amino-acid polypeptide reads, in one-letter code: EEF1A lysine methyltransferase 3 (226 aa).

Residues Trp57, Gly83 to Gly85, Asp104, Trp133, and Ala150 contribute to the S-adenosyl-L-methionine site.

It belongs to the methyltransferase superfamily. METTL21 family. As to quaternary structure, interacts with members of the heat shock protein 70 and 90 families and of the TCP-1 chaperonin family, as well as with HSPD1, STIP1 and tubulin; at least some of these proteins may be methylation substrates.

It is found in the cytoplasm. The protein localises to the cytoskeleton. The protein resides in the microtubule organizing center. Its subcellular location is the centrosome. It carries out the reaction L-lysyl-[protein] + 3 S-adenosyl-L-methionine = N(6),N(6),N(6)-trimethyl-L-lysyl-[protein] + 3 S-adenosyl-L-homocysteine + 3 H(+). The enzyme catalyses L-lysyl-[protein] + S-adenosyl-L-methionine = N(6)-methyl-L-lysyl-[protein] + S-adenosyl-L-homocysteine + H(+). The catalysed reaction is N(6)-methyl-L-lysyl-[protein] + S-adenosyl-L-methionine = N(6),N(6)-dimethyl-L-lysyl-[protein] + S-adenosyl-L-homocysteine + H(+). It catalyses the reaction N(6),N(6)-dimethyl-L-lysyl-[protein] + S-adenosyl-L-methionine = N(6),N(6),N(6)-trimethyl-L-lysyl-[protein] + S-adenosyl-L-homocysteine + H(+). In terms of biological role, protein-lysine methyltransferase that selectively mono-, di- and trimethylates 'Lys-165' of the translation elongation factors EEF1A1 and EEF1A2 in an aminoacyl-tRNA and GTP-dependent manner. EEF1A1 methylation by EEF1AKMT3 is dynamic as well as inducible by stress conditions, such as ER-stress, and plays a regulatory role on mRNA translation. The polypeptide is EEF1A lysine methyltransferase 3 (Homo sapiens (Human)).